We begin with the raw amino-acid sequence, 166 residues long: Large ribosomal subunit protein uL10 (166 aa).

This sequence belongs to the universal ribosomal protein uL10 family. As to quaternary structure, part of the ribosomal stalk of the 50S ribosomal subunit. The N-terminus interacts with L11 and the large rRNA to form the base of the stalk. The C-terminus forms an elongated spine to which L12 dimers bind in a sequential fashion forming a multimeric L10(L12)X complex.

In terms of biological role, forms part of the ribosomal stalk, playing a central role in the interaction of the ribosome with GTP-bound translation factors. The sequence is that of Large ribosomal subunit protein uL10 from Phytoplasma australiense.